A 316-amino-acid chain; its full sequence is L-lactate dehydrogenase 3 (316 aa).

NAD(+) is bound by residues valine 16, aspartate 37, arginine 42, and tyrosine 68. Residue arginine 91 coordinates substrate. Residues serine 104, 121–123 (ASN), and threonine 146 each bind NAD(+). Substrate is bound at residue 123-126 (NPVD). Substrate is bound at residue 151-154 (DSSR). Positions 156 and 171 each coordinate beta-D-fructose 1,6-bisphosphate. Histidine 178 acts as the Proton acceptor in catalysis. Threonine 233 contributes to the substrate binding site.

The protein belongs to the LDH/MDH superfamily. LDH family. In terms of assembly, homotetramer.

It localises to the cytoplasm. The enzyme catalyses (S)-lactate + NAD(+) = pyruvate + NADH + H(+). It functions in the pathway fermentation; pyruvate fermentation to lactate; (S)-lactate from pyruvate: step 1/1. Allosterically activated by fructose 1,6-bisphosphate (FBP). In terms of biological role, catalyzes the conversion of lactate to pyruvate. In Bacillus cereus (strain ATCC 14579 / DSM 31 / CCUG 7414 / JCM 2152 / NBRC 15305 / NCIMB 9373 / NCTC 2599 / NRRL B-3711), this protein is L-lactate dehydrogenase 3.